Consider the following 685-residue polypeptide: MDFREILMIASKGQGVNNVPKRYSLAVGPPKKDPKVKGVQSAAVQAFLKRKEEELRRKALEEKRRKEELVKKRIELKHDKKARAMAKRTKDNFHGYNGIPIEEKSKKRQATESHTSQGTDREYEMEEENEFLEYNHAESEQEYEEEQEPPKVESKPKVPLKSAPPPMNFTDLLRLAEKKQFEPVEIKVVKKSEERPMTAEELREREFLERKHRRKKLETDGKLPPTVSKKAPSQKESVGTKLSKGSGDRHPSSKGMPLPHAEKKSRPSMANEKHLALSSSKSMPGERIKAGSGNSSQPSLREGHDKPVFNGAGKPHSSTSSPSVPKTSASRTQKSAVEHKAKKSLSHPSHSRPGPMVTPHNKAKSPGVRQPGSSSSSAPGQPSTGVARPTVSSGPVPRRQNGSSSSGPERSISGSKKPTNDSNPSRRTVSGTCGPGQPASSSGGPGRPISGSVSSARPLGSSRGPGRPVSSPHELRRPVSGLGPPGRSVSGPGRSISGSIPAGRTVSNSVPGRPVSSLGPGQTVSSSGPTIKPKCTVVSETISSKNIISRSSNGQMNGMKPPLSGYRAAQGPQRLPFPTGYKRQREYEEEDDDDDEYDSEMEDFIEDEGEPQEEISKHIREIFGYDRKKYKDESDYALRYMESSWKEQQKEEAKSLRLGMQEDLEEMRREEEEMQRRRAKKLKRR.

Residues 1 to 570 (MDFREILMIA…PPLSGYRAAQ (570 aa)) are important for interaction with DNA. Lys37 participates in a covalent cross-link: Glycyl lysine isopeptide (Lys-Gly) (interchain with G-Cter in SUMO2). A coiled-coil region spans residues 45 to 81 (QAFLKRKEEELRRKALEEKRRKEELVKKRIELKHDKK). A disordered region spans residues 79–168 (DKKARAMAKR…PLKSAPPPMN (90 aa)). A compositionally biased stretch (basic and acidic residues) spans 101–111 (IEEKSKKRQAT). Residues 123-148 (YEMEEENEFLEYNHAESEQEYEEEQE) are a coiled coil. Lys187 is covalently cross-linked (Glycyl lysine isopeptide (Lys-Gly) (interchain with G-Cter in SUMO2)). Composition is skewed to basic and acidic residues over residues 188–209 (VVKK…EFLE) and 260–275 (HAEK…EKHL). Disordered stretches follow at residues 188–615 (VVKK…QEEI) and 644–685 (SWKE…LKRR). Ser278 is subject to Phosphoserine. Composition is skewed to low complexity over residues 317-330 (SSTS…TSAS), 365-385 (SPGV…PSTG), and 402-415 (GSSS…ISGS). Positions 416–431 (KKPTNDSNPSRRTVSG) are enriched in polar residues. Residues 435-501 (PGQPASSSGG…PGRSISGSIP (67 aa)) show a composition bias toward low complexity. Ser471 bears the Phosphoserine mark. Positions 519–529 (GPGQTVSSSGP) are enriched in polar residues. Positions 542 to 553 (ISSKNIISRSSN) are enriched in low complexity. The tract at residues 571–685 (GPQRLPFPTG…RRRAKKLKRR (115 aa)) is important for interaction with histones. The residue at position 582 (Lys582) is an N6-acetyllysine. The segment covering 587 to 613 (YEEEDDDDDEYDSEMEDFIEDEGEPQE) has biased composition (acidic residues). Ser599 is modified (phosphoserine). 2 stretches are compositionally biased toward basic and acidic residues: residues 644–655 (SWKEQQKEEAKS) and 666–676 (EMRREEEEMQR). Residues 645-685 (WKEQQKEEAKSLRLGMQEDLEEMRREEEEMQRRRAKKLKRR) adopt a coiled-coil conformation.

It belongs to the SPT2 family. In terms of assembly, interacts with histones. Interacts with a heterotetrameric complex formed by histone H3 and H4, especially when the histone tetramer is not bound to DNA. Interacts with histone H3.3.

It is found in the nucleus. The protein localises to the nucleolus. Functionally, histone chaperone that stabilizes pre-existing histone tetramers and regulates replication-independent histone exchange on chromatin. Required for normal chromatin refolding in the coding region of transcribed genes, and for the suppression of spurious transcription. Binds DNA and histones and promotes nucleosome assembly (in vitro). Facilitates formation of tetrameric histone complexes containing histone H3 and H4. Modulates RNA polymerase 1-mediated transcription. Binds DNA, with a preference for branched DNA species, such as Y-form DNA and Holliday junction DNA. The polypeptide is Protein SPT2 homolog (SPTY2D1) (Homo sapiens (Human)).